The primary structure comprises 472 residues: 3-isopropylmalate dehydratase large subunit (472 aa).

The [4Fe-4S] cluster site is built by C347, C407, and C410.

It belongs to the aconitase/IPM isomerase family. LeuC type 1 subfamily. Heterodimer of LeuC and LeuD. [4Fe-4S] cluster is required as a cofactor.

The catalysed reaction is (2R,3S)-3-isopropylmalate = (2S)-2-isopropylmalate. It participates in amino-acid biosynthesis; L-leucine biosynthesis; L-leucine from 3-methyl-2-oxobutanoate: step 2/4. Catalyzes the isomerization between 2-isopropylmalate and 3-isopropylmalate, via the formation of 2-isopropylmaleate. The polypeptide is 3-isopropylmalate dehydratase large subunit (Opitutus terrae (strain DSM 11246 / JCM 15787 / PB90-1)).